The following is an 87-amino-acid chain: MGVAVRVVYCGAUGYKSKYLQLKKKLEDEFPGRLDICGEGTPQVTGFFEVLVAGKLVHSKKGGDGYVDTESKFLKLVAAIKAALAQG.

The segment at residues 10-13 (CGAU) is a cross-link (cysteinyl-selenocysteine (Cys-Sec); redox-active). Sec13 is a non-standard amino acid (selenocysteine). Cys37 is modified (S-glutathionyl cysteine).

Belongs to the SelWTH family. Selenoprotein W subfamily. As to quaternary structure, interacts with DPYSL2, PRDX1, YWHAB, YWHAG, HSP70 and HSP90.

Its subcellular location is the cytoplasm. In terms of biological role, plays a role as a glutathione (GSH)-dependent antioxidant. May be involved in a redox-related process. May play a role in the myopathies of selenium deficiency. The chain is Selenoprotein W from Sus scrofa (Pig).